The primary structure comprises 141 residues: Hemoglobin subunit alpha (141 aa).

The 141-residue stretch at 1-141 (VLSAADKTHV…VSTVLVSKYR (141 aa)) folds into the Globin domain. Ser3 carries the post-translational modification Phosphoserine. Lys7 is modified (N6-succinyllysine). Thr8 bears the Phosphothreonine mark. At Lys11 the chain carries N6-succinyllysine. Lys16 bears the N6-acetyllysine; alternate mark. N6-succinyllysine; alternate is present on Lys16. Phosphoserine is present on Ser35. Lys40 is subject to N6-succinyllysine. Phosphoserine is present on Ser49. His58 is a binding site for O2. Heme b is bound at residue His87. Ser102 is modified (phosphoserine). Thr108 carries the phosphothreonine modification. The residue at position 124 (Ser124) is a Phosphoserine. Thr134 carries the post-translational modification Phosphothreonine. Ser138 carries the post-translational modification Phosphoserine.

It belongs to the globin family. Heterotetramer of two alpha chains and two beta chains. Red blood cells.

In terms of biological role, involved in oxygen transport from the lung to the various peripheral tissues. Functionally, hemopressin acts as an antagonist peptide of the cannabinoid receptor CNR1. Hemopressin-binding efficiently blocks cannabinoid receptor CNR1 and subsequent signaling. This is Hemoglobin subunit alpha (HBA) from Dasypus novemcinctus (Nine-banded armadillo).